The primary structure comprises 228 residues: Ribonuclease 3 (228 aa).

Positions 2–130 (LTYLEQKINY…LLAAVYLDGG (129 aa)) constitute an RNase III domain. E43 provides a ligand contact to Mg(2+). D47 is a catalytic residue. Mg(2+) is bound by residues D116 and E119. E119 is an active-site residue. Residues 157 to 226 (DYKTRLQEVV…AMEALSKLGI (70 aa)) form the DRBM domain.

This sequence belongs to the ribonuclease III family. As to quaternary structure, homodimer. Mg(2+) is required as a cofactor.

It is found in the cytoplasm. It catalyses the reaction Endonucleolytic cleavage to 5'-phosphomonoester.. Digests double-stranded RNA. Involved in the processing of primary rRNA transcript to yield the immediate precursors to the large and small rRNAs (23S and 16S). Processes some mRNAs, and tRNAs when they are encoded in the rRNA operon. Processes pre-crRNA and tracrRNA of type II CRISPR loci if present in the organism. In Caldanaerobacter subterraneus subsp. tengcongensis (strain DSM 15242 / JCM 11007 / NBRC 100824 / MB4) (Thermoanaerobacter tengcongensis), this protein is Ribonuclease 3.